The following is a 599-amino-acid chain: Elongation factor 4 (599 aa).

The region spanning 5–187 is the tr-type G domain; sequence NRIRNFSIVA…AIVTRLPAPK (183 aa). GTP contacts are provided by residues 17–22 and 134–137; these read DHGKST and NKVD.

It belongs to the TRAFAC class translation factor GTPase superfamily. Classic translation factor GTPase family. LepA subfamily.

The protein localises to the cell inner membrane. It carries out the reaction GTP + H2O = GDP + phosphate + H(+). In terms of biological role, required for accurate and efficient protein synthesis under certain stress conditions. May act as a fidelity factor of the translation reaction, by catalyzing a one-codon backward translocation of tRNAs on improperly translocated ribosomes. Back-translocation proceeds from a post-translocation (POST) complex to a pre-translocation (PRE) complex, thus giving elongation factor G a second chance to translocate the tRNAs correctly. Binds to ribosomes in a GTP-dependent manner. The chain is Elongation factor 4 from Jannaschia sp. (strain CCS1).